A 98-amino-acid polypeptide reads, in one-letter code: Protein S100-A13 (98 aa).

The region spanning 18-53 (STFFTFAGREGRKGSLNINEFKELATQQLPHLLKDV) is the EF-hand domain. 7 residues coordinate Ca(2+): Ser32, Glu37, Asp64, Asn66, Asp68, Glu70, and Glu75. Ser32 carries the phosphoserine modification.

It belongs to the S-100 family. In terms of assembly, homodimer. Part of a copper-dependent multiprotein complex containing S100A13, FGF1 and SYT1. Interacts with FGF1 and SYT1. Interacts with IL1A.

The protein localises to the cytoplasm. It localises to the secreted. Functionally, plays a role in the export of proteins that lack a signal peptide and are secreted by an alternative pathway. Binds two calcium ions per subunit. Binds one copper ion. Binding of one copper ion does not interfere with calcium binding. Required for the copper-dependent stress-induced export of IL1A and FGF1. The calcium-free protein binds to lipid vesicles containing phosphatidylserine, but not to vesicles containing phosphatidylcholine. In Mus musculus (Mouse), this protein is Protein S100-A13 (S100a13).